The primary structure comprises 64 residues: Large ribosomal subunit protein bL35 (64 aa).

Over residues 1–22 (MPKMKSHTGMGKRVRVTGKGKI) the composition is skewed to basic residues. A disordered region spans residues 1–28 (MPKMKSHTGMGKRVRVTGKGKIVKQQAG).

It belongs to the bacterial ribosomal protein bL35 family.

This Salinispora tropica (strain ATCC BAA-916 / DSM 44818 / JCM 13857 / NBRC 105044 / CNB-440) protein is Large ribosomal subunit protein bL35.